The following is a 561-amino-acid chain: Putative pectinesterase/pectinesterase inhibitor 24 (561 aa).

The chain crosses the membrane as a helical span at residues 26 to 46 (IAIIAVSLVILAGIVIGAVFG). A pectinesterase inhibitor 24 region spans residues 64-211 (DSISVSVKAV…TELTSNALAI (148 aa)). 4 N-linked (GlcNAc...) asparagine glycosylation sites follow: Asn92, Asn130, Asn148, and Asn200. The tract at residues 255–548 (DIVVAKDGSG…TVKPFIDGGR (294 aa)) is pectinesterase 24. Substrate contacts are provided by Thr330 and Gln360. Asp383 serves as the catalytic Proton donor; for pectinesterase activity. Cys397 and Cys417 are disulfide-bonded. Asp404 (nucleophile; for pectinesterase activity) is an active-site residue. Substrate is bound by residues Arg468 and Trp470. Residue Asn472 is glycosylated (N-linked (GlcNAc...) asparagine).

The protein in the N-terminal section; belongs to the PMEI family. In the C-terminal section; belongs to the pectinesterase family.

Its subcellular location is the membrane. It catalyses the reaction [(1-&gt;4)-alpha-D-galacturonosyl methyl ester](n) + n H2O = [(1-&gt;4)-alpha-D-galacturonosyl](n) + n methanol + n H(+). It participates in glycan metabolism; pectin degradation; 2-dehydro-3-deoxy-D-gluconate from pectin: step 1/5. Functionally, acts in the modification of cell walls via demethylesterification of cell wall pectin. The chain is Putative pectinesterase/pectinesterase inhibitor 24 (PME24) from Arabidopsis thaliana (Mouse-ear cress).